A 351-amino-acid polypeptide reads, in one-letter code: Glycerol-1-phosphate dehydrogenase [NAD(P)+] (351 aa).

Residues 97-101 (GKTID) and 119-122 (TAPS) each bind NAD(+). Substrate is bound at residue Asp124. Ser128 is an NAD(+) binding site. Residue Asp171 participates in substrate binding. Zn(2+) contacts are provided by Asp171 and His251. Residue His255 participates in substrate binding. Position 267 (His267) interacts with Zn(2+).

Belongs to the glycerol-1-phosphate dehydrogenase family. As to quaternary structure, homodimer. Zn(2+) is required as a cofactor.

It localises to the cytoplasm. It carries out the reaction sn-glycerol 1-phosphate + NAD(+) = dihydroxyacetone phosphate + NADH + H(+). The enzyme catalyses sn-glycerol 1-phosphate + NADP(+) = dihydroxyacetone phosphate + NADPH + H(+). It functions in the pathway membrane lipid metabolism; glycerophospholipid metabolism. In terms of biological role, catalyzes the NAD(P)H-dependent reduction of dihydroxyacetonephosphate (DHAP or glycerone phosphate) to glycerol 1-phosphate (G1P). The G1P thus generated is used as the glycerophosphate backbone of phospholipids in the cellular membranes of Archaea. This is Glycerol-1-phosphate dehydrogenase [NAD(P)+] from Metallosphaera sedula (strain ATCC 51363 / DSM 5348 / JCM 9185 / NBRC 15509 / TH2).